Consider the following 527-residue polypeptide: Bifunctional purine biosynthesis protein PurH (527 aa).

In terms of domain architecture, MGS-like spans 9–156; sequence NAKRPIRRAL…KNHPSVAVVV (148 aa).

The protein belongs to the PurH family.

It carries out the reaction (6R)-10-formyltetrahydrofolate + 5-amino-1-(5-phospho-beta-D-ribosyl)imidazole-4-carboxamide = 5-formamido-1-(5-phospho-D-ribosyl)imidazole-4-carboxamide + (6S)-5,6,7,8-tetrahydrofolate. The enzyme catalyses IMP + H2O = 5-formamido-1-(5-phospho-D-ribosyl)imidazole-4-carboxamide. It participates in purine metabolism; IMP biosynthesis via de novo pathway; 5-formamido-1-(5-phospho-D-ribosyl)imidazole-4-carboxamide from 5-amino-1-(5-phospho-D-ribosyl)imidazole-4-carboxamide (10-formyl THF route): step 1/1. The protein operates within purine metabolism; IMP biosynthesis via de novo pathway; IMP from 5-formamido-1-(5-phospho-D-ribosyl)imidazole-4-carboxamide: step 1/1. The protein is Bifunctional purine biosynthesis protein PurH of Mycolicibacterium paratuberculosis (strain ATCC BAA-968 / K-10) (Mycobacterium paratuberculosis).